The sequence spans 379 residues: Cytochrome b (379 aa).

Transmembrane regions (helical) follow at residues 33–53 (FGSL…FLAM), 77–98 (WTIR…FIHV), 113–133 (WNVG…GYVL), and 178–198 (FFAL…IHLL). Residues histidine 83 and histidine 97 each coordinate heme b. 2 residues coordinate heme b: histidine 182 and histidine 196. Residue histidine 201 participates in a ubiquinone binding. 4 helical membrane-spanning segments follow: residues 226-246 (TKDF…ALFY), 288-308 (LGGV…PFLQ), 320-340 (LSQF…WIGG), and 347-367 (FINI…FIMP).

The protein belongs to the cytochrome b family. In terms of assembly, the cytochrome bc1 complex contains 11 subunits: 3 respiratory subunits (MT-CYB, CYC1 and UQCRFS1), 2 core proteins (UQCRC1 and UQCRC2) and 6 low-molecular weight proteins (UQCRH/QCR6, UQCRB/QCR7, UQCRQ/QCR8, UQCR10/QCR9, UQCR11/QCR10 and a cleavage product of UQCRFS1). This cytochrome bc1 complex then forms a dimer. Requires heme b as cofactor.

It localises to the mitochondrion inner membrane. Its function is as follows. Component of the ubiquinol-cytochrome c reductase complex (complex III or cytochrome b-c1 complex) that is part of the mitochondrial respiratory chain. The b-c1 complex mediates electron transfer from ubiquinol to cytochrome c. Contributes to the generation of a proton gradient across the mitochondrial membrane that is then used for ATP synthesis. In Lepilemur dorsalis (Grey-backed sportive lemur), this protein is Cytochrome b (MT-CYB).